The chain runs to 117 residues: UPF0344 protein GK0697 (117 aa).

The next 4 membrane-spanning stretches (helical) occupy residues 1–21 (MTHA…LAVS), 39–59 (LFYI…ASIS), 60–80 (ALYW…EMVL), and 97–117 (VIAL…FDLF).

It belongs to the UPF0344 family.

The protein localises to the cell membrane. This Geobacillus kaustophilus (strain HTA426) protein is UPF0344 protein GK0697.